The primary structure comprises 321 residues: GDP-L-fucose synthase (321 aa).

NADP(+) is bound by residues 10-16 (GHRGMVG), 36-41 (RDELNL), and 105-108 (LGSS). The active-site Proton donor/acceptor is Y136. NADP(+) contacts are provided by residues K140, 163 to 166 (PTNL), and H179. Residues R187, W202, R209, and D278 each contribute to the substrate site.

It belongs to the NAD(P)-dependent epimerase/dehydratase family. Fucose synthase subfamily. In terms of assembly, homodimer.

It localises to the cytoplasm. The catalysed reaction is GDP-beta-L-fucose + NADP(+) = GDP-4-dehydro-alpha-D-rhamnose + NADPH + H(+). The protein operates within nucleotide-sugar biosynthesis; GDP-L-fucose biosynthesis via de novo pathway; GDP-L-fucose from GDP-alpha-D-mannose: step 2/2. It functions in the pathway exopolysaccharide biosynthesis; colanic acid biosynthesis. Its activity is regulated as follows. Subject to product inhibition by NADP and GDP-fucose. Its function is as follows. Catalyzes the two-step NADP-dependent conversion of GDP-4-dehydro-6-deoxy-D-mannose to GDP-fucose, involving an epimerase and a reductase reaction. The protein is GDP-L-fucose synthase of Escherichia coli (strain K12).